We begin with the raw amino-acid sequence, 434 residues long: Glutamate/glutamine/aspartate/asparagine transport system permease protein BztC (434 aa).

10 helical membrane passes run 41 to 61, 113 to 133, 135 to 155, 156 to 176, 180 to 200, 227 to 247, 272 to 292, 298 to 318, 360 to 380, and 398 to 418; these read LTVF…PWLL, LFVT…DALP, KLIW…WGGP, IWGP…FTAL, LGVP…WLYA, FLLA…LGIL, GVPL…FLPP, LILR…AEVI, IVSS…VGLF, and GTYW…NFSM. The ABC transmembrane type-1 domain occupies 227 to 422; it reads FLLALVIGVT…LFNFSMSRYS (196 aa).

This sequence belongs to the binding-protein-dependent transport system permease family. HisMQ subfamily. In terms of assembly, bztB and BztC form a heterodimer which can form a membrane complex with a homodimer of BztD.

The protein localises to the cell inner membrane. In terms of biological role, part of a binding-protein-dependent transport system for glutamate, glutamine, aspartate and asparagine. Probably responsible for the translocation of the substrate across the membrane. The protein is Glutamate/glutamine/aspartate/asparagine transport system permease protein BztC (bztC) of Rhodobacter capsulatus (strain ATCC BAA-309 / NBRC 16581 / SB1003).